The sequence spans 298 residues: Nucleotide-binding protein GTNG_3015 (298 aa).

17 to 24 (GMSGAGKT) is a binding site for ATP. GTP is bound at residue 68–71 (DLRS).

Belongs to the RapZ-like family.

Functionally, displays ATPase and GTPase activities. The sequence is that of Nucleotide-binding protein GTNG_3015 from Geobacillus thermodenitrificans (strain NG80-2).